The following is a 96-amino-acid chain: uncharacterized protein (96 aa).

The N-terminal stretch at 1-19 is a signal peptide; sequence MKQIIPALITLSFSPMAIA.

This is an uncharacterized protein from Synechocystis sp. (strain ATCC 27184 / PCC 6803 / Kazusa).